Here is an 86-residue protein sequence, read N- to C-terminus: Anti-adapter protein IraP (86 aa).

A coiled-coil region spans residues 1–36 (MKNLIAELLLKLAQKEEESKELCAQVEALEIIVTAM).

It belongs to the IraP family. As to quaternary structure, interacts with RssB.

It localises to the cytoplasm. Inhibits RpoS proteolysis by regulating RssB activity, thereby increasing the stability of the sigma stress factor RpoS especially during phosphate starvation, but also in stationary phase and during nitrogen starvation. Its effect on RpoS stability is due to its interaction with RssB, which probably blocks the interaction of RssB with RpoS, and the consequent delivery of the RssB-RpoS complex to the ClpXP protein degradation pathway. This Shigella boydii serotype 18 (strain CDC 3083-94 / BS512) protein is Anti-adapter protein IraP.